We begin with the raw amino-acid sequence, 382 residues long: 8-amino-7-oxononanoate synthase (382 aa).

Arg-26 contacts substrate. 104–105 (GY) is a binding site for pyridoxal 5'-phosphate. His-129 provides a ligand contact to substrate. Pyridoxal 5'-phosphate contacts are provided by residues Ser-175, 200 to 203 (DEAH), and 232 to 235 (TLSK). Lys-235 is modified (N6-(pyridoxal phosphate)lysine). Residue Thr-345 participates in substrate binding.

It belongs to the class-II pyridoxal-phosphate-dependent aminotransferase family. BioF subfamily. In terms of assembly, homodimer. Requires pyridoxal 5'-phosphate as cofactor.

The enzyme catalyses 6-carboxyhexanoyl-[ACP] + L-alanine + H(+) = (8S)-8-amino-7-oxononanoate + holo-[ACP] + CO2. It participates in cofactor biosynthesis; biotin biosynthesis. Catalyzes the decarboxylative condensation of pimeloyl-[acyl-carrier protein] and L-alanine to produce 8-amino-7-oxononanoate (AON), [acyl-carrier protein], and carbon dioxide. The polypeptide is 8-amino-7-oxononanoate synthase (Mycobacterium sp. (strain KMS)).